The following is a 270-amino-acid chain: Molybdenum storage protein subunit beta (270 aa).

Octamer consisting of 4 alpha and 4 beta chains.

The protein localises to the cytoplasm. Intracellular storage of molybdenum. Binds polyoxomolybdates. Can bind at least 90 molybdenum atoms per protein molecule. The chain is Molybdenum storage protein subunit beta from Azotobacter vinelandii (strain DJ / ATCC BAA-1303).